The following is a 66-amino-acid chain: DNA gyrase inhibitor YacG (66 aa).

Zn(2+) contacts are provided by C9, C12, C28, and C32. Positions 45 to 66 (HKIAGSEGSEDELYSGDLEPRH) are disordered.

Belongs to the DNA gyrase inhibitor YacG family. As to quaternary structure, interacts with GyrB. Requires Zn(2+) as cofactor.

Its function is as follows. Inhibits all the catalytic activities of DNA gyrase by preventing its interaction with DNA. Acts by binding directly to the C-terminal domain of GyrB, which probably disrupts DNA binding by the gyrase. This is DNA gyrase inhibitor YacG from Pseudomonas putida (strain ATCC 700007 / DSM 6899 / JCM 31910 / BCRC 17059 / LMG 24140 / F1).